The primary structure comprises 391 residues: Nucleosome assembly protein 1-like 1 (391 aa).

The segment covering 1–10 has biased composition (basic and acidic residues); sequence MADIDNKEQS. The interval 1–32 is disordered; sequence MADIDNKEQSELDQDLDDVEEVEEEETGEETK. Alanine 2 bears the N-acetylalanine mark. Serine 10 carries the post-translational modification Phosphoserine. Residues 11–28 are compositionally biased toward acidic residues; the sequence is ELDQDLDDVEEVEEEETG. Phosphothreonine is present on residues threonine 62 and threonine 64. Serine 69 bears the Phosphoserine mark. An N6-acetyllysine modification is found at lysine 116. The NAP1L motif signature appears at 125–150; the sequence is YEPTEEECEWKPDEEDEISEELKEKA. Over residues 132 to 143 the composition is skewed to acidic residues; sequence CEWKPDEEDEIS. Residues 132 to 163 form a disordered region; that stretch reads CEWKPDEEDEISEELKEKAKIEDEKKDEEKED. A Phosphoserine modification is found at serine 143. Over residues 144–163 the composition is skewed to basic and acidic residues; that stretch reads EELKEKAKIEDEKKDEEKED. A Nuclear localization signal motif is present at residues 273 to 279; that stretch reads IKKKQKH. Acidic residues predominate over residues 346-376; sequence AIEDDDDDYDEEGEEADEEGEEEGDEENDPD. Residues 346 to 391 form a disordered region; it reads AIEDDDDDYDEEGEEADEEGEEEGDEENDPDYDPKKDQNPAECKQQ. 5-glutamyl polyglycine occurs at positions 359 and 360. Over residues 377–391 the composition is skewed to basic and acidic residues; sequence YDPKKDQNPAECKQQ. Cysteine 388 is modified (cysteine methyl ester). A lipid anchor (S-farnesyl cysteine) is attached at cysteine 388. Residues 389-391 constitute a propeptide, removed in mature form; sequence KQQ.

This sequence belongs to the nucleosome assembly protein (NAP) family. In terms of assembly, homodimer. The dimer binds strongly and sequentially to single and double H2A-H2B heterodimers. Interacts with ERCC6; this interaction increases ERCC6 processivity. Interacts with RAD54. Interacts with SETD1A. Polyglycylated by TTLL10 on glutamate residues, resulting in polyglycine chains on the gamma-carboxyl group. Both polyglutamylation and polyglycylation modifications can coexist on the same protein on adjacent residues, and lowering polyglycylation levels increases polyglutamylation, and reciprocally. In terms of processing, polyglutamylated by TTLL4 on glutamate residues, resulting in polyglutamate chains on the gamma-carboxyl group. Both polyglutamylation and polyglycylation modifications can coexist on the same protein on adjacent residues, and lowering polyglycylation levels increases polyglutamylation, and reciprocally.

The protein localises to the nucleus. It localises to the melanosome. It is found in the cytoplasm. Functionally, histone chaperone that plays a role in the nuclear import of H2A-H2B and nucleosome assembly. Also participates in several important DNA repair mechanisms: greatly enhances ERCC6-mediated chromatin remodeling which is essential for transcription-coupled nucleotide excision DNA repair. Also stimulates homologous recombination (HR) by RAD51 and RAD54 which is essential in mitotic DNA double strand break (DSB) repair. Plays a key role in the regulation of embryonic neurogenesis. Promotes the proliferation of neural progenitors and inhibits neuronal differentiation during cortical development. Regulates neurogenesis via the modulation of RASSF10; regulates RASSF10 expression by promoting SETD1A-mediated H3K4 methylation at the RASSF10 promoter. The chain is Nucleosome assembly protein 1-like 1 (NAP1L1) from Pongo abelii (Sumatran orangutan).